The chain runs to 197 residues: ATP-dependent Clp protease proteolytic subunit (197 aa).

The active-site Nucleophile is serine 98. Histidine 123 is a catalytic residue.

It belongs to the peptidase S14 family. As to quaternary structure, fourteen ClpP subunits assemble into 2 heptameric rings which stack back to back to give a disk-like structure with a central cavity, resembling the structure of eukaryotic proteasomes. Forms large heterooligomeric complexes consisting of an ATPase component (ClpX, ClpC or ClpE) and a proteolytic component (ClpP).

It is found in the cytoplasm. It catalyses the reaction Hydrolysis of proteins to small peptides in the presence of ATP and magnesium. alpha-casein is the usual test substrate. In the absence of ATP, only oligopeptides shorter than five residues are hydrolyzed (such as succinyl-Leu-Tyr-|-NHMec, and Leu-Tyr-Leu-|-Tyr-Trp, in which cleavage of the -Tyr-|-Leu- and -Tyr-|-Trp bonds also occurs).. Its activity is regulated as follows. Low intrinsic peptidase activity is stimulated by ATP-binding subunits ClpC, ClpE and ClpX. Activity is disregulated by acyldepsipeptides (ADEP) antibiotics, which negate the need for ATP-binding subunits for activation and which makes it into an unregulated protease. Each ClpP subunit binds 1 ADEP molecule, which prevents binding of ClpX. ADEP binding causes conformational shifts that open the gated pore of the ring. Protease activity is inhibited by diisopropylfluoro-phosphate. Protease activity is inhibited by bortezomib, an oncology drug originally designed to work on the human proteasome. Its function is as follows. Cleaves peptides in various proteins in a process that requires ATP hydrolysis. Has a limited peptidase activity in the absence of ATP-binding subunits ClpC, ClpE or ClpX. Has a chymotrypsin-like activity. Plays a major role in the degradation of misfolded proteins. ClpXP is involved in the complete degradation of the site-2 clipped anti-sigma-W factor RsiW. This results in the release of SigW and the transcriptional activation of genes under the control of the sigma-W factor. Probably the major protease that degrades proteins tagged by trans-translation. The protein is ATP-dependent Clp protease proteolytic subunit of Bacillus subtilis (strain 168).